We begin with the raw amino-acid sequence, 335 residues long: MAITRASFAICILLSLATIATADYYAPSSPPVYTSPVNKPTLPPPVYTPPVHKPTLPPPVYTPPVHKPTLSPPVYTKPTLPPPAYTPPVYNKPTLPAPVYTPPVYKPTLSPPVYTKPTLLPPVFKPTLSPPVYTKPTLSPTVYKPTLSPPVNNKPSLSPPVYKPTLSPPVYTKPTLPPPVYKKSPSYSPPPPFAPKPTYTPPTKPYVPEIIKAVGGIILCKNGYETYPIQGAKAKIVCSERGSYEKSKNEVVIYSDPTDFKGYFHVVLTHIKNLSNCRVKLYTSPVETCKNPTNVNKGLTGVPFSMYSDKNLKLFNVGPFYFTAGSKAAPATPRY.

Positions 1 to 22 (MAITRASFAICILLSLATIATA) are cleaved as a signal peptide. 39 tandem repeats follow at residues 30-34 (PPVYT), 35-39 (SPVNK), 40-43 (PTLP), 44-48 (PPVYT), 49-53 (PPVHK), 54-57 (PTLP), 58-62 (PPVYT), 63-67 (PPVHK), 68-71 (PTLS), 72-76 (PPVYT), 77-81 (KPTLP), 82-86 (PPAYT), 87-91 (PPVYN), 92-96 (KPTLP), 97-101 (APVYT), 102-106 (PPVYK), 107-110 (PTLS), 111-115 (PPVYT), 116-120 (KPTLL), 121-125 (PPVFK), 126-130 (PTLSP), 131-135 (PVYTK), 136-139 (PTLS), 140-144 (PTVYK), 145-148 (PTLS), 149-153 (PPVNN), 154-158 (KPSLS), 159-163 (PPVYK), 164-167 (PTLS), 168-172 (PPVYT), 173-177 (KPTLP), 178-182 (PPVYK), 184-189 (SPSYSP), 190-194 (PPPFA), 195-200 (PKPTYT), 201-207 (PPTKPYV), 208-212 (PEIIK), 284-288 (SPVET), and 319-323 (PFYFT). The segment at 30 to 323 (PPVYTSPVNK…LFNVGPFYFT (294 aa)) is 39 X 5 AA approximate repeats.

Belongs to the plant proline-rich protein superfamily. ENOD12 family. As to expression, exclusively expressed in roots, especially in root hairs.

The protein localises to the secreted. The protein resides in the cell wall. May contribute to cell wall structure in root hairs. The polypeptide is Proline-rich protein 1 (PRP1) (Arabidopsis thaliana (Mouse-ear cress)).